The sequence spans 381 residues: L-lactate dehydrogenase A-like 6B (381 aa).

NAD(+) contacts are provided by residues 101–106 (DLDEDK) and Arg148. 3 residues coordinate substrate: Arg155, Asn187, and Arg218. Asn187 contacts NAD(+). His242 serves as the catalytic Proton acceptor. Thr297 provides a ligand contact to substrate.

It belongs to the LDH/MDH superfamily. LDH family. As to expression, testis specific.

The catalysed reaction is (S)-lactate + NAD(+) = pyruvate + NADH + H(+). It participates in fermentation; pyruvate fermentation to lactate; (S)-lactate from pyruvate: step 1/1. The polypeptide is L-lactate dehydrogenase A-like 6B (LDHAL6B) (Homo sapiens (Human)).